The primary structure comprises 322 residues: N-acetyl-gamma-glutamyl-phosphate reductase (322 aa).

The active site involves Cys132.

It belongs to the NAGSA dehydrogenase family. Type 1 subfamily.

The protein localises to the cytoplasm. The enzyme catalyses N-acetyl-L-glutamate 5-semialdehyde + phosphate + NADP(+) = N-acetyl-L-glutamyl 5-phosphate + NADPH + H(+). It participates in amino-acid biosynthesis; L-arginine biosynthesis; N(2)-acetyl-L-ornithine from L-glutamate: step 3/4. Its function is as follows. Catalyzes the NADPH-dependent reduction of N-acetyl-5-glutamyl phosphate to yield N-acetyl-L-glutamate 5-semialdehyde. This Bacteroides fragilis (strain YCH46) protein is N-acetyl-gamma-glutamyl-phosphate reductase.